The chain runs to 1475 residues: ABC transporter G family member 15 (1475 aa).

Residues methionine 1 to glycine 10 are compositionally biased toward basic and acidic residues. 2 disordered regions span residues methionine 1–isoleucine 40 and asparagine 75–alanine 94. Residues asparagine 17 to asparagine 34 are compositionally biased toward low complexity. Residues asparagine 25–glutamate 67 adopt a coiled-coil conformation. The ABC transporter 1 domain occupies leucine 155 to proline 404. An ABC transmembrane type-2 1 domain is found at tryptophan 507–serine 753. 5 helical membrane-spanning segments follow: residues isoleucine 596–leucine 616, phenylalanine 623–tyrosine 641, isoleucine 653–isoleucine 673, valine 680–methionine 699, and isoleucine 770–isoleucine 790. Positions phenylalanine 842–valine 1087 constitute an ABC transporter 2 domain. Glycine 879–threonine 886 lines the ATP pocket. Helical transmembrane passes span glycine 1180 to phenylalanine 1200, phenylalanine 1216 to isoleucine 1236, phenylalanine 1256 to phenylalanine 1276, phenylalanine 1293 to isoleucine 1313, alanine 1323 to isoleucine 1343, and phenylalanine 1449 to leucine 1469. Residues glycine 1180–leucine 1404 enclose the ABC transmembrane type-2 2 domain.

This sequence belongs to the ABC transporter superfamily. ABCG family. PDR (TC 3.A.1.205) subfamily.

The protein localises to the membrane. In Dictyostelium discoideum (Social amoeba), this protein is ABC transporter G family member 15 (abcG15).